Consider the following 282-residue polypeptide: 2-dehydro-3-deoxyphosphooctonate aldolase (282 aa).

The protein belongs to the KdsA family.

Its subcellular location is the cytoplasm. It catalyses the reaction D-arabinose 5-phosphate + phosphoenolpyruvate + H2O = 3-deoxy-alpha-D-manno-2-octulosonate-8-phosphate + phosphate. Its pathway is carbohydrate biosynthesis; 3-deoxy-D-manno-octulosonate biosynthesis; 3-deoxy-D-manno-octulosonate from D-ribulose 5-phosphate: step 2/3. It functions in the pathway bacterial outer membrane biogenesis; lipopolysaccharide biosynthesis. This chain is 2-dehydro-3-deoxyphosphooctonate aldolase, found in Shewanella woodyi (strain ATCC 51908 / MS32).